The following is a 345-amino-acid chain: Dihydroorotase (345 aa).

Zn(2+) contacts are provided by His-13 and His-15. Residues 15 to 17 (HFR) and Asn-41 contribute to the substrate site. 3 residues coordinate Zn(2+): Lys-98, His-135, and His-173. Lys-98 carries the post-translational modification N6-carboxylysine. Residue His-135 coordinates substrate. A substrate-binding site is contributed by Leu-218. Asp-246 is a Zn(2+) binding site. The active site involves Asp-246. Residues His-250 and Ala-262 each contribute to the substrate site.

The protein belongs to the metallo-dependent hydrolases superfamily. DHOase family. Class II DHOase subfamily. As to quaternary structure, homodimer. It depends on Zn(2+) as a cofactor.

It carries out the reaction (S)-dihydroorotate + H2O = N-carbamoyl-L-aspartate + H(+). The protein operates within pyrimidine metabolism; UMP biosynthesis via de novo pathway; (S)-dihydroorotate from bicarbonate: step 3/3. In terms of biological role, catalyzes the reversible cyclization of carbamoyl aspartate to dihydroorotate. The polypeptide is Dihydroorotase (Shewanella pealeana (strain ATCC 700345 / ANG-SQ1)).